A 614-amino-acid polypeptide reads, in one-letter code: Interleukin-18 receptor accessory protein (614 aa).

The signal sequence occupies residues 1–19 (MLCLGWVFLWFVAGEKTTG). The Extracellular portion of the chain corresponds to 20 to 356 (FNHSACATKK…RTIRLRKKEE (337 aa)). N-linked (GlcNAc...) asparagine glycosylation is present at Asn21. Residues Cys46 and Cys126 are joined by a disulfide bond. The segment at 59–78 (ASQLSPTQSPAHKPCSGSQK) is disordered. 2 consecutive Ig-like C2-type domains span residues 148 to 234 (PQRN…WTVR) and 250 to 352 (PEIL…IRLR). A glycan (N-linked (GlcNAc...) asparagine) is linked at Asn151. 3 disulfide bridges follow: Cys154/Cys179, Cys174/Cys220, and Cys179/Cys220. The N-linked (GlcNAc...) asparagine glycan is linked to Asn227. Cysteines 272 and 336 form a disulfide. A glycan (N-linked (GlcNAc...) asparagine) is linked at Asn344. A helical membrane pass occupies residues 357 to 377 (VVFVYILLGTALMLVGVLVAA). Residues 378–614 (AFLYWYWIEV…LLLYSDQKRC (237 aa)) lie on the Cytoplasmic side of the membrane. Positions 405–558 (KEFDAFVSYS…RFWTQIRYHM (154 aa)) constitute a TIR domain. Glu492 is a catalytic residue.

Belongs to the interleukin-1 receptor family. Forms a ternary complex with IL18 and IL18R1. Within this complex, IL18R1 is involved in ligand-binding and IL18RAP in signaling leading to NF-kappa-B and JNK activation.

It is found in the cell membrane. It carries out the reaction NAD(+) + H2O = ADP-D-ribose + nicotinamide + H(+). Functionally, within the IL18 receptor complex, does not mediate IL18-binding, but involved in IL18-dependent signal transduction, leading to NF-kappa-B and JNK activation. May play a role in IL18-mediated IFNG synthesis from T-helper 1 (Th1) cells. The chain is Interleukin-18 receptor accessory protein from Mus musculus (Mouse).